The following is a 219-amino-acid chain: Redox-sensing transcriptional repressor Rex (219 aa).

Positions 17–56 (RYLRYVEDLLNHDIMRISSSELSQRMGYTASQVRQDFNNF) form a DNA-binding region, H-T-H motif. An NAD(+)-binding site is contributed by 91-96 (GVGNLG).

It belongs to the transcriptional regulatory Rex family. Homodimer.

The protein resides in the cytoplasm. Functionally, modulates transcription in response to changes in cellular NADH/NAD(+) redox state. The sequence is that of Redox-sensing transcriptional repressor Rex from Caldicellulosiruptor saccharolyticus (strain ATCC 43494 / DSM 8903 / Tp8T 6331).